A 556-amino-acid chain; its full sequence is Arginine--tRNA ligase (556 aa).

A 'HIGH' region motif is present at residues A132–H142.

It belongs to the class-I aminoacyl-tRNA synthetase family. Monomer.

Its subcellular location is the cytoplasm. The enzyme catalyses tRNA(Arg) + L-arginine + ATP = L-arginyl-tRNA(Arg) + AMP + diphosphate. The polypeptide is Arginine--tRNA ligase (Listeria monocytogenes serotype 4b (strain F2365)).